Here is a 323-residue protein sequence, read N- to C-terminus: UDP-glucuronate 4-epimerase (323 aa).

11–13 (GFI) lines the NAD(+) pocket. The Proton acceptor role is filled by Tyr152. Position 156 (Lys156) interacts with NAD(+).

Belongs to the NAD(P)-dependent epimerase/dehydratase family. NAD(+) serves as cofactor.

The enzyme catalyses UDP-alpha-D-glucuronate = UDP-alpha-D-galacturonate. In terms of biological role, catalyzes the interconversion of UDP-D-glucuronic acid (UDP-GlcA) and UDP-D-galacturonic acid (UDP-GalA). This chain is UDP-glucuronate 4-epimerase, found in Thermodesulfobacterium geofontis (strain OPF15).